The sequence spans 148 residues: Probable histone H2A.1 (148 aa).

The segment covering 1–23 has biased composition (basic residues); sequence MDASTKTKKGAGGRKGGPRKKSV. Disordered regions lie at residues 1–28 and 127–148; these read MDASTKTKKGAGGRKGGPRKKSVTRSTR and KNEKAATTTKSPSKATKSPKKA. The span at 131 to 142 shows a compositional bias: low complexity; that stretch reads AATTTKSPSKAT. 2 short sequence motifs (SPKK motif) span residues 137-140 and 144-147; these read SPSK and SPKK.

This sequence belongs to the histone H2A family. As to quaternary structure, the nucleosome is a histone octamer containing two molecules each of H2A, H2B, H3 and H4 assembled in one H3-H4 heterotetramer and two H2A-H2B heterodimers. The octamer wraps approximately 147 bp of DNA.

It is found in the nucleus. Its subcellular location is the chromosome. Core component of nucleosome. Nucleosomes wrap and compact DNA into chromatin, limiting DNA accessibility to the cellular machineries which require DNA as a template. Histones thereby play a central role in transcription regulation, DNA repair, DNA replication and chromosomal stability. DNA accessibility is regulated via a complex set of post-translational modifications of histones, also called histone code, and nucleosome remodeling. The protein is Probable histone H2A.1 of Medicago truncatula (Barrel medic).